An 82-amino-acid chain; its full sequence is Spore coat protein T (82 aa).

The propeptide occupies 1–19 (MDYPLNEQSFEQITPYDER).

The protein resides in the spore coat. In terms of biological role, inner spore coat protein which seems to play a role in germination. The protein is Spore coat protein T (cotT) of Bacillus subtilis (strain 168).